The following is a 386-amino-acid chain: Peroxisomal membrane protein PEX13 (386 aa).

Positions 1–76 (MSSTAVPRPK…SSGTYGESNT (76 aa)) are disordered. The Lumenal portion of the chain corresponds to 1-263 (MSSTAVPRPK…KATRRKISWK (263 aa)). Residues 23 to 39 (RNAQSLSAMMTSNQQDS) are compositionally biased toward polar residues. The segment covering 44–55 (ESNNSNSASESA) has biased composition (low complexity). Positions 65–76 (LNSSGTYGESNT) are enriched in polar residues. A helical transmembrane segment spans residues 264-280 (PLLFFLMAVFGFPYLLN). Residues 281–386 (KFITKLQTSG…EHVDDETRTH (106 aa)) are Cytoplasmic-facing. Positions 306-372 (SKLEFARALY…PYNYIEIIKR (67 aa)) constitute an SH3 domain.

The protein belongs to the peroxin-13 family. In terms of assembly, interacts (via SH3 domain) with PEX14 (via SH3-binding motif); forming the PEX13-PEX14 docking complex.

It is found in the peroxisome membrane. In terms of biological role, component of the PEX13-PEX14 docking complex, a translocon channel that specifically mediates the import of peroxisomal cargo proteins bound to PEX5 or PEX21 receptors. The PEX13-PEX14 docking complex forms a large import pore which can be opened to a diameter of about 9 nm. Mechanistically, PEX5 (or PEX21) receptor along with cargo proteins associates with the PEX14 subunit of the PEX13-PEX14 docking complex in the cytosol, leading to the insertion of the receptor into the organelle membrane with the concomitant translocation of the cargo into the peroxisome matrix. In Saccharomyces cerevisiae (strain ATCC 204508 / S288c) (Baker's yeast), this protein is Peroxisomal membrane protein PEX13.